Here is a 1017-residue protein sequence, read N- to C-terminus: MIQNSAGYRSLNTASPMTVQVKNQKKICARCNKLVIPDSQRTKTTLKALGKYYHESCFTCQDCQKPLKPKYFPYQVDKTSESILLCQYDYFRRHNLLCHVCDTPLRGLYYTAFGYRYDEEHFSCTICATPCGVKKCFMYGNQLYCKYHFLKYFSKRCKGCEFPISDQYIEFPKGEEIHCWHPECYGIHKYWHVNLAAETVGLQYLPKLEYNPNSGDKDINPTAYELDKQMQAFNFILSKTWSVLYRFEEEAASCISDMFQYLTSNDQLKGIESTGLLVLKIDCLFRGLDTLNLSTNKSMPVNSDQECIENNAMAASKYSKFPKNLSTKIMIYLQLLRKLGTENKNETITISSFMSVITGLAHFLKLLTRFGLYTALENNKLTHSVNPLLRFLREVEKNELFENNPFQYIKTPVNATDSCAGCNKYIQEECIQFYEHRWHIACFTCSSCHKNINPRSLTDPTFNKEKKKILCSHCSIDDPASVPGFKFVTKLAQLIFLLKIALVKSRTVMLKSKASNKVGRNSLQSTMLKEQTYIRTLNDIKRLRSRRESVRVTHNKQQARKSVILETAETDLNDPTKQGDSKNLVIQTDDPSSSQQVSTRENVFSNTKTLTLDDISRIVAAEQARELRPNAFAHFKKLKETDDETSNVVPKKSGVYYSELSTMELSMIRAISLSLLAGKQLISKTDPNYTSLVSMVFSNEKQVTGSFWNRMKIMMSMEPKKPITKTVFGAPLDVLCEKWGVDSDLGVGPVKIRIPIIIDELISSLRQMDMSVEGIFRKNGNIRRLRELTANIDSNPTEAPDFSKENAIQLSALLKKFIRELPQPILSTDLYELWIKAAKIDLEDEKQRVILLIYSLLPTYNRNLLEALLSFLHWTSSFSYIENEMGSKMDIHNLSTVITPNILYLRHKEISNDNVPDEPESGLVDSFAQNKGENYFLAIEIVDYLITHNEEMAMVPKFLMNLLKDVQLQKLDNYESINHFISTVMQSKTIDYSECDIKTPVTVKDSTTTVIQGEINK.

Position 1 is an N-acetylmethionine (methionine 1). LIM zinc-binding domains follow at residues 28–88 (CARC…LCQY) and 98–148 (CHVC…CKYH). Residues 155–184 (KRCKGCEFPISDQYIEFPKGEEIHCWHPEC) enclose the LIM zinc-binding 3; truncated domain. One can recognise an LIM zinc-binding 4 domain in the interval 419–474 (CAGCNKYIQEECIQFYEHRWHIACFTCSSCHKNINPRSLTDPTFNKEKKKILCSHC). A Phosphoserine modification is found at serine 562. A disordered region spans residues 570–602 (TDLNDPTKQGDSKNLVIQTDDPSSSQQVSTREN). The segment covering 584 to 602 (LVIQTDDPSSSQQVSTREN) has biased composition (polar residues). The 224-residue stretch at 730 to 953 (APLDVLCEKW…YLITHNEEMA (224 aa)) folds into the Rho-GAP domain.

Interacts with CDC42, RHO1 and RHO2.

The protein localises to the cytoplasm. The protein resides in the bud. Its subcellular location is the bud neck. Its function is as follows. Acts in signal transduction. Activates CDC42, RHO1 and RHO2. Negatively regulates 1,3-beta-glucan synthesis. May be responsible for the down-regulation of CDC42 during mating. The sequence is that of Rho-GTPase-activating protein LRG1 (LRG1) from Saccharomyces cerevisiae (strain ATCC 204508 / S288c) (Baker's yeast).